Reading from the N-terminus, the 411-residue chain is Glucose-1-phosphate adenylyltransferase (411 aa).

Residues G164, 179-180 (EK), and S197 each bind alpha-D-glucose 1-phosphate.

It belongs to the bacterial/plant glucose-1-phosphate adenylyltransferase family. In terms of assembly, homotetramer.

The catalysed reaction is alpha-D-glucose 1-phosphate + ATP + H(+) = ADP-alpha-D-glucose + diphosphate. It functions in the pathway glycan biosynthesis; glycogen biosynthesis. Functionally, involved in the biosynthesis of ADP-glucose, a building block required for the elongation reactions to produce glycogen. Catalyzes the reaction between ATP and alpha-D-glucose 1-phosphate (G1P) to produce pyrophosphate and ADP-Glc. In Corynebacterium kroppenstedtii (strain DSM 44385 / JCM 11950 / CIP 105744 / CCUG 35717), this protein is Glucose-1-phosphate adenylyltransferase.